The primary structure comprises 368 residues: 1-deoxy-D-xylulose 5-phosphate reductoisomerase (368 aa).

NADPH contacts are provided by threonine 7, glycine 8, serine 9, isoleucine 10, glycine 31, lysine 32, asparagine 33, and asparagine 113. 1-deoxy-D-xylulose 5-phosphate is bound at residue lysine 114. Residue glutamate 115 coordinates NADPH. Position 133 (aspartate 133) interacts with Mn(2+). 1-deoxy-D-xylulose 5-phosphate-binding residues include serine 134, glutamate 135, serine 158, and histidine 181. Glutamate 135 provides a ligand contact to Mn(2+). Glycine 187 contacts NADPH. 1-deoxy-D-xylulose 5-phosphate is bound by residues serine 194, asparagine 199, lysine 200, and glutamate 203. Glutamate 203 lines the Mn(2+) pocket.

The protein belongs to the DXR family. Requires Mg(2+) as cofactor. Mn(2+) serves as cofactor.

It catalyses the reaction 2-C-methyl-D-erythritol 4-phosphate + NADP(+) = 1-deoxy-D-xylulose 5-phosphate + NADPH + H(+). The protein operates within isoprenoid biosynthesis; isopentenyl diphosphate biosynthesis via DXP pathway; isopentenyl diphosphate from 1-deoxy-D-xylulose 5-phosphate: step 1/6. Catalyzes the NADPH-dependent rearrangement and reduction of 1-deoxy-D-xylulose-5-phosphate (DXP) to 2-C-methyl-D-erythritol 4-phosphate (MEP). The protein is 1-deoxy-D-xylulose 5-phosphate reductoisomerase of Helicobacter pylori (strain HPAG1).